An 834-amino-acid polypeptide reads, in one-letter code: Protein ROOT HAIR DEFECTIVE 3 homolog 2 (834 aa).

Residues Met1–Leu683 are Cytoplasmic-facing. Positions Gly37–Arg252 constitute a GB1/RHD3-type G domain. Gly47–Ser54 contacts GTP. A coiled-coil region spans residues Met214–His241. Residues Pro684–Leu704 form a helical membrane-spanning segment. Residues Lys705–Pro707 are Lumenal-facing. Residues Leu708–Asp728 form a helical membrane-spanning segment. The Cytoplasmic segment spans residues Ile729–Met834. Polar residues predominate over residues Thr767–Gln783. The segment at Thr767 to Met834 is disordered. Residues Ser784 to Ser803 show a composition bias toward low complexity. Positions Thr823–Met834 are enriched in polar residues.

Belongs to the TRAFAC class dynamin-like GTPase superfamily. GB1/RHD3 GTPase family. RHD3 subfamily. In terms of tissue distribution, expressed in roots, leaves, stems and flowers.

It localises to the endoplasmic reticulum membrane. Probable GTP-binding protein that may be involved in cell development. This chain is Protein ROOT HAIR DEFECTIVE 3 homolog 2, found in Arabidopsis thaliana (Mouse-ear cress).